Here is a 64-residue protein sequence, read N- to C-terminus: Large ribosomal subunit protein bL35 (64 aa).

The span at 1-26 (MPKMKSHRGASKRFKRTASGKLKRSH) shows a compositional bias: basic residues. Residues 1 to 42 (MPKMKSHRGASKRFKRTASGKLKRSHAYTSHLFANKSTKAKR) form a disordered region.

It belongs to the bacterial ribosomal protein bL35 family.

The sequence is that of Large ribosomal subunit protein bL35 from Exiguobacterium sp. (strain ATCC BAA-1283 / AT1b).